The primary structure comprises 234 residues: Peroxisomal coenzyme A diphosphatase ndx-8 (234 aa).

Residues 27–162 (EQDAGVLILL…TFLIDEFYMV (136 aa)) enclose the Nudix hydrolase domain. A Nudix box motif is present at residues 66-90 (GGMMDDEDGQNVRRTAIREAYEEVG). Residues glutamate 84 and glutamate 88 each contribute to the Mg(2+) site. Residues 170–190 (YPTTYGVTALMCIVVAIGLLG) form a helical membrane-spanning segment. The short motif at 232-234 (SKI) is the Microbody targeting signal element.

This sequence belongs to the Nudix hydrolase family. It depends on Mg(2+) as a cofactor. Requires Mn(2+) as cofactor.

It is found in the peroxisome membrane. In terms of biological role, coenzyme A diphosphatase which mediates the cleavage of CoA into 3',5'-ADP and 4'-phosphopantetheine. In Caenorhabditis elegans, this protein is Peroxisomal coenzyme A diphosphatase ndx-8 (ndx-8).